The chain runs to 231 residues: Regulatory protein VanRc (231 aa).

Residues 4–117 form the Response regulatory domain; that stretch reads KIVVVDDEKE…EVVARVKTQL (114 aa). Residue Asp-53 is modified to 4-aspartylphosphate. The segment at residues 132–231 is a DNA-binding region (ompR/PhoB-type); sequence VEEYEKDGLI…VWGVGYIIEK (100 aa).

In terms of processing, phosphorylated by VanSc.

It localises to the cytoplasm. In terms of biological role, member of the two-component regulatory system VanSc/VanRc. Binds to the promoter regions of target genes. Activates the transcription of vanC1 and vanXYC in response to vancomycin which results in vancomycin resistance. The protein is Regulatory protein VanRc of Enterococcus gallinarum.